The sequence spans 282 residues: Transcription factor MYB20 (282 aa).

HTH myb-type domains lie at 9 to 61 (KVGL…TNYL) and 62 to 116 (RPDL…KKKL). DNA-binding regions (H-T-H motif) lie at residues 37 to 61 (WRAVPKLSGLLRCGKSCRLRWTNYL) and 89 to 112 (WSKIASHLPGRTDNEIKNHWNTHI).

As to expression, expressed in chalaza of mature seeds, cotyledons, rosette leaves, cauline leaves, veins of stems, mature siliques, sepals and styles. Expressed at low levels in roots.

Its subcellular location is the nucleus. Its function is as follows. Transcription factor that acts as a positive regulator of abscisic acid (ABA) signaling in response to salt stress. Acts as a negative regulator ABI1, ABI2 and PP2CA, which are protein phosphatases 2C acting as negative regulator of ABA signaling. Binds to the DNA specific sequence and core element 5'-ACGT-3' found in the promoters of ABI1 and PP2CA to negatively regulate their expression during ABA-dependent salt stress response. This is Transcription factor MYB20 from Arabidopsis thaliana (Mouse-ear cress).